Reading from the N-terminus, the 168-residue chain is Photosystem I assembly protein Ycf3 (168 aa).

TPR repeat units lie at residues 35–68, 72–105, and 120–153; these read AFTY…EIDP, SYIL…NPFL, and GEQA…TPGN.

It belongs to the Ycf3 family.

It is found in the plastid. It localises to the chloroplast thylakoid membrane. In terms of biological role, essential for the assembly of the photosystem I (PSI) complex. May act as a chaperone-like factor to guide the assembly of the PSI subunits. The protein is Photosystem I assembly protein Ycf3 of Panax ginseng (Korean ginseng).